The following is a 190-amino-acid chain: NADH-quinone oxidoreductase subunit B (190 aa).

[4Fe-4S] cluster is bound by residues Cys39, Cys40, Cys104, and Cys135.

It belongs to the complex I 20 kDa subunit family. In terms of assembly, NDH-1 is composed of 14 different subunits. Subunits NuoB, C, D, E, F, and G constitute the peripheral sector of the complex. [4Fe-4S] cluster serves as cofactor.

It localises to the cell inner membrane. It carries out the reaction a quinone + NADH + 5 H(+)(in) = a quinol + NAD(+) + 4 H(+)(out). Functionally, NDH-1 shuttles electrons from NADH, via FMN and iron-sulfur (Fe-S) centers, to quinones in the respiratory chain. The immediate electron acceptor for the enzyme in this species is believed to be a menaquinone. Couples the redox reaction to proton translocation (for every two electrons transferred, four hydrogen ions are translocated across the cytoplasmic membrane), and thus conserves the redox energy in a proton gradient. In Chlorobium phaeobacteroides (strain BS1), this protein is NADH-quinone oxidoreductase subunit B.